We begin with the raw amino-acid sequence, 158 residues long: Snaclec mucrocetin subunit alpha (158 aa).

An N-terminal signal peptide occupies residues 1–23 (MGRFIFVSFGLLVVFLSLSGTGA). Intrachain disulfides connect cysteine 27–cysteine 38, cysteine 55–cysteine 152, and cysteine 127–cysteine 144. The C-type lectin domain occupies 34 to 153 (YDRYCYQAFS…CGRENPFVCK (120 aa)).

Belongs to the snaclec family. In terms of assembly, tetramer of heterodimers of alpha and beta subunits (alphabeta)(4); disulfide-linked. In terms of tissue distribution, expressed by the venom gland.

The protein resides in the secreted. Platelet-agglutinating factor that acts in a vWF-independent manner. Binds specifically to platelet GPIbalpha (GP1BA) to a distinct binding site from that of flavocetin-A. The chain is Snaclec mucrocetin subunit alpha from Protobothrops mucrosquamatus (Taiwan habu).